We begin with the raw amino-acid sequence, 97 residues long: Aspartyl/glutamyl-tRNA(Asn/Gln) amidotransferase subunit C (97 aa).

It belongs to the GatC family. As to quaternary structure, heterotrimer of A, B and C subunits.

It catalyses the reaction L-glutamyl-tRNA(Gln) + L-glutamine + ATP + H2O = L-glutaminyl-tRNA(Gln) + L-glutamate + ADP + phosphate + H(+). It carries out the reaction L-aspartyl-tRNA(Asn) + L-glutamine + ATP + H2O = L-asparaginyl-tRNA(Asn) + L-glutamate + ADP + phosphate + 2 H(+). Its function is as follows. Allows the formation of correctly charged Asn-tRNA(Asn) or Gln-tRNA(Gln) through the transamidation of misacylated Asp-tRNA(Asn) or Glu-tRNA(Gln) in organisms which lack either or both of asparaginyl-tRNA or glutaminyl-tRNA synthetases. The reaction takes place in the presence of glutamine and ATP through an activated phospho-Asp-tRNA(Asn) or phospho-Glu-tRNA(Gln). In Anaeromyxobacter dehalogenans (strain 2CP-C), this protein is Aspartyl/glutamyl-tRNA(Asn/Gln) amidotransferase subunit C.